Here is a 216-residue protein sequence, read N- to C-terminus: Cytochrome c biogenesis ATP-binding export protein CcmA (216 aa).

Positions 18-216 constitute an ABC transporter domain; sequence LQVEGLAGRR…AHARTLEISA (199 aa). An ATP-binding site is contributed by 50–57; it reads GHNGSGKT.

This sequence belongs to the ABC transporter superfamily. CcmA exporter (TC 3.A.1.107) family. As to quaternary structure, the complex is composed of two ATP-binding proteins (CcmA) and two transmembrane proteins (CcmB).

The protein resides in the cell inner membrane. It carries out the reaction heme b(in) + ATP + H2O = heme b(out) + ADP + phosphate + H(+). Functionally, part of the ABC transporter complex CcmAB involved in the biogenesis of c-type cytochromes; once thought to export heme, this seems not to be the case, but its exact role is uncertain. Responsible for energy coupling to the transport system. The sequence is that of Cytochrome c biogenesis ATP-binding export protein CcmA from Nitrosococcus oceani (strain ATCC 19707 / BCRC 17464 / JCM 30415 / NCIMB 11848 / C-107).